The following is a 188-amino-acid chain: NAD(P)H-quinone oxidoreductase subunit J (188 aa).

Residues 1-12 (MSETPSKQTAAS) are compositionally biased toward polar residues. Positions 1 to 23 (MSETPSKQTAASDETGAVVAPEP) are disordered.

This sequence belongs to the complex I 30 kDa subunit family. NDH-1 can be composed of about 15 different subunits; different subcomplexes with different compositions have been identified which probably have different functions.

Its subcellular location is the cellular thylakoid membrane. It catalyses the reaction a plastoquinone + NADH + (n+1) H(+)(in) = a plastoquinol + NAD(+) + n H(+)(out). The enzyme catalyses a plastoquinone + NADPH + (n+1) H(+)(in) = a plastoquinol + NADP(+) + n H(+)(out). Functionally, NDH-1 shuttles electrons from an unknown electron donor, via FMN and iron-sulfur (Fe-S) centers, to quinones in the respiratory and/or the photosynthetic chain. The immediate electron acceptor for the enzyme in this species is believed to be plastoquinone. Couples the redox reaction to proton translocation, and thus conserves the redox energy in a proton gradient. Cyanobacterial NDH-1 also plays a role in inorganic carbon-concentration. The sequence is that of NAD(P)H-quinone oxidoreductase subunit J from Synechococcus sp. (strain CC9605).